The following is an 88-amino-acid chain: U1-hexatoxin-Iw1c (88 aa).

An N-terminal signal peptide occupies residues 1-17; sequence LKFVVLICLVIMASTSA. Q18 carries the pyrrolidone carboxylic acid modification. 5 disulfide bridges follow: C20/C31, C25/C39, C30/C65, C49/C73, and C67/C80. A propeptide spanning residues 86-88 is cleaved from the precursor; it reads RSE.

Belongs to the MIT-like AcTx family. In terms of tissue distribution, expressed by the venom gland.

The protein localises to the secreted. In Illawarra wisharti (Illawarra funnel-web spider), this protein is U1-hexatoxin-Iw1c.